Consider the following 575-residue polypeptide: 5-aminolevulinate synthase, mitochondrial (575 aa).

The transit peptide at 1–55 (MESITRVSMSVCPFVKSSSAQALRQLSKNSALTSQARQCPFMGAALNAKESTRSY) directs the protein to the mitochondrion. Residues Arg124, Ser237, and Lys256 each contribute to the substrate site. Positions 289, 317, and 361 each coordinate pyridoxal 5'-phosphate. The active site involves Lys364. Lys364 carries the N6-(pyridoxal phosphate)lysine modification. Residues Thr393 and Thr394 each coordinate pyridoxal 5'-phosphate. A substrate-binding site is contributed by Thr479.

This sequence belongs to the class-II pyridoxal-phosphate-dependent aminotransferase family. Homodimer. Requires pyridoxal 5'-phosphate as cofactor.

It is found in the mitochondrion matrix. The catalysed reaction is succinyl-CoA + glycine + H(+) = 5-aminolevulinate + CO2 + CoA. It functions in the pathway porphyrin-containing compound metabolism; protoporphyrin-IX biosynthesis; 5-aminolevulinate from glycine: step 1/1. In terms of biological role, catalyzes the synthesis of 5-aminolevulinate (ALA) from succinyl-CoA and glycine, the first and rate-limiting step in heme biosynthesis. This is 5-aminolevulinate synthase, mitochondrial (HEM1) from Debaryomyces hansenii (strain ATCC 36239 / CBS 767 / BCRC 21394 / JCM 1990 / NBRC 0083 / IGC 2968) (Yeast).